Here is a 62-residue protein sequence, read N- to C-terminus: MDIVKSINTSVDAVLDELDCAYFAVTLKVEFKTGKLLVCIGFGDTLLAARDKAYAKLGLSTI.

This Porcine transmissible gastroenteritis coronavirus (strain FS772/70) (TGEV) protein is Non-structural protein 3a.